A 230-amino-acid chain; its full sequence is MELCVALDLPSAKENLALAESLKAYNVWMKVGFRAYIRDGKPFIEALKAINPDFRIFLDLKLYDIPNTMADAAEEIAKLGVDMFNIHASAGAVAMKTVMERLSSYEKRPLVLAVTALTSFNEENFRMIYEKGIDEKAEQFARMSFENGLDGVVCSTFESRAIKNATSDDFLTLCPGIRPFGEDAGDQQRVATLELANEERVDFPVVGRPIYKDSDPKGKVEEILKLISTF.

Substrate is bound by residues Asp-8, Lys-30, 59 to 68 (DLKLYDIPNT), Thr-118, Arg-178, Gln-187, Gly-207, and Arg-208. Lys-61 acts as the Proton donor in catalysis.

This sequence belongs to the OMP decarboxylase family. Type 1 subfamily. As to quaternary structure, homodimer.

It catalyses the reaction orotidine 5'-phosphate + H(+) = UMP + CO2. Its pathway is pyrimidine metabolism; UMP biosynthesis via de novo pathway; UMP from orotate: step 2/2. Functionally, catalyzes the decarboxylation of orotidine 5'-monophosphate (OMP) to uridine 5'-monophosphate (UMP). In Sulfurovum sp. (strain NBC37-1), this protein is Orotidine 5'-phosphate decarboxylase.